The chain runs to 155 residues: MSRRGTTEEKTAKSDPIYRNRLVNMLVNRILKHGKKSLAYQIIYRAVKKIQQKTETNPLSVLRQAIHGVTPDIAVKARRVGGSTHQVPIEIGSTQGKALAIRWLLWASRKRPGRNMAFKLSSELVDAAKGSGDAIRKKEETHRMAEANRAFAHFR.

The protein belongs to the universal ribosomal protein uS7 family. Part of the 30S ribosomal subunit.

Its subcellular location is the plastid. It localises to the chloroplast. One of the primary rRNA binding proteins, it binds directly to 16S rRNA where it nucleates assembly of the head domain of the 30S subunit. The polypeptide is Small ribosomal subunit protein uS7cz/uS7cy (rps7-A) (Piper cenocladum (Ant piper)).